We begin with the raw amino-acid sequence, 602 residues long: Translation initiation factor IF-2 (602 aa).

Residues Lys-112–Lys-281 form the tr-type G domain. The G1 stretch occupies residues Gly-121–Thr-128. Position 121 to 128 (Gly-121 to Thr-128) interacts with GTP. A G2 region spans residues Gly-146–His-150. The interval Asp-167 to Gly-170 is G3. Residues Asp-167–His-171 and Asn-221–Asp-224 contribute to the GTP site. Residues Asn-221–Asp-224 form a G4 region. The segment at Ser-257–Leu-259 is G5.

The protein belongs to the TRAFAC class translation factor GTPase superfamily. Classic translation factor GTPase family. IF-2 subfamily.

It is found in the cytoplasm. One of the essential components for the initiation of protein synthesis. Protects formylmethionyl-tRNA from spontaneous hydrolysis and promotes its binding to the 30S ribosomal subunits. Also involved in the hydrolysis of GTP during the formation of the 70S ribosomal complex. In Mycoplasmopsis synoviae (strain 53) (Mycoplasma synoviae), this protein is Translation initiation factor IF-2.